Here is a 372-residue protein sequence, read N- to C-terminus: Aminomethyltransferase (372 aa).

It belongs to the GcvT family. As to quaternary structure, the glycine cleavage system is composed of four proteins: P, T, L and H.

It catalyses the reaction N(6)-[(R)-S(8)-aminomethyldihydrolipoyl]-L-lysyl-[protein] + (6S)-5,6,7,8-tetrahydrofolate = N(6)-[(R)-dihydrolipoyl]-L-lysyl-[protein] + (6R)-5,10-methylene-5,6,7,8-tetrahydrofolate + NH4(+). The glycine cleavage system catalyzes the degradation of glycine. In Burkholderia ambifaria (strain MC40-6), this protein is Aminomethyltransferase.